The sequence spans 308 residues: Methionyl-tRNA formyltransferase (308 aa).

110–113 contacts (6S)-5,6,7,8-tetrahydrofolate; that stretch reads SLLP.

This sequence belongs to the Fmt family.

It carries out the reaction L-methionyl-tRNA(fMet) + (6R)-10-formyltetrahydrofolate = N-formyl-L-methionyl-tRNA(fMet) + (6S)-5,6,7,8-tetrahydrofolate + H(+). In terms of biological role, attaches a formyl group to the free amino group of methionyl-tRNA(fMet). The formyl group appears to play a dual role in the initiator identity of N-formylmethionyl-tRNA by promoting its recognition by IF2 and preventing the misappropriation of this tRNA by the elongation apparatus. This chain is Methionyl-tRNA formyltransferase, found in Neisseria meningitidis serogroup C / serotype 2a (strain ATCC 700532 / DSM 15464 / FAM18).